A 92-amino-acid chain; its full sequence is Cell division protein FtsB (92 aa).

Topologically, residues 1 to 3 are cytoplasmic; the sequence is MRF. A helical transmembrane segment spans residues 4–21; that stretch reads FQVGLLCLALFVQYRLWF. The Periplasmic portion of the chain corresponds to 22–92; the sequence is GHNGVQDYTR…TFIRVLPAQQ (71 aa). A coiled-coil region spans residues 40 to 73; the sequence is LQTNEKLIKRNKVLTADIEDLKLGHEGIEERARN.

It belongs to the FtsB family. In terms of assembly, part of a complex composed of FtsB, FtsL and FtsQ.

The protein localises to the cell inner membrane. Essential cell division protein. May link together the upstream cell division proteins, which are predominantly cytoplasmic, with the downstream cell division proteins, which are predominantly periplasmic. The polypeptide is Cell division protein FtsB (Pseudoalteromonas translucida (strain TAC 125)).